Here is a 130-residue protein sequence, read N- to C-terminus: DNA-directed RNA polymerase subunit omega (130 aa).

The disordered stretch occupies residues 110-130; the sequence is EELLKGLEGLAPPEEQPEEDE.

This sequence belongs to the RNA polymerase subunit omega family. In terms of assembly, the RNAP catalytic core consists of 2 alpha, 1 beta, 1 beta' and 1 omega subunit. When a sigma factor is associated with the core the holoenzyme is formed, which can initiate transcription.

It catalyses the reaction RNA(n) + a ribonucleoside 5'-triphosphate = RNA(n+1) + diphosphate. Its function is as follows. Promotes RNA polymerase assembly. Latches the N- and C-terminal regions of the beta' subunit thereby facilitating its interaction with the beta and alpha subunits. In Rhodopseudomonas palustris (strain HaA2), this protein is DNA-directed RNA polymerase subunit omega.